Reading from the N-terminus, the 372-residue chain is Cytochrome b (372 aa).

4 helical membrane passes run 25 to 45 (FGSMLLTCLIMQILTGFFLAI), 69 to 90 (WIMQNLHAIGASMFFICIYIHI), 105 to 125 (WLSGTTLLITLMATAFFGYVL), and 170 to 190 (FFALHFILPFAIISLSSIHII). Heme b-binding residues include His-75 and His-89. Positions 174 and 188 each coordinate heme b. His-193 contacts a ubiquinone. 4 helical membrane-spanning segments follow: residues 218–238 (YKDMLMITIMVTLLFIILSFL), 280–300 (LGGTMALTMSIMILMTTPFTH), 312–332 (LSQTMFWTLIVTFIMITWTAT), and 339–358 (FITISQTTTVFYFSFFIMTP).

Belongs to the cytochrome b family. As to quaternary structure, the cytochrome bc1 complex contains 3 respiratory subunits (MT-CYB, CYC1 and UQCRFS1), 2 core proteins (UQCRC1 and UQCRC2) and probably 6 low-molecular weight proteins. It depends on heme b as a cofactor.

It localises to the mitochondrion inner membrane. In terms of biological role, component of the ubiquinol-cytochrome c reductase complex (complex III or cytochrome b-c1 complex) that is part of the mitochondrial respiratory chain. The b-c1 complex mediates electron transfer from ubiquinol to cytochrome c. Contributes to the generation of a proton gradient across the mitochondrial membrane that is then used for ATP synthesis. The chain is Cytochrome b (MT-CYB) from Aspidelaps scutatus (Shield-nose snake).